The sequence spans 318 residues: Aspartate carbamoyltransferase catalytic subunit (318 aa).

Residues R64 and T65 each coordinate carbamoyl phosphate. K92 is an L-aspartate binding site. Carbamoyl phosphate is bound by residues R114, H142, and Q145. The L-aspartate site is built by R175 and R229. Residues G270 and P271 each contribute to the carbamoyl phosphate site.

This sequence belongs to the aspartate/ornithine carbamoyltransferase superfamily. ATCase family. As to quaternary structure, heterododecamer (2C3:3R2) of six catalytic PyrB chains organized as two trimers (C3), and six regulatory PyrI chains organized as three dimers (R2).

It carries out the reaction carbamoyl phosphate + L-aspartate = N-carbamoyl-L-aspartate + phosphate + H(+). It functions in the pathway pyrimidine metabolism; UMP biosynthesis via de novo pathway; (S)-dihydroorotate from bicarbonate: step 2/3. Functionally, catalyzes the condensation of carbamoyl phosphate and aspartate to form carbamoyl aspartate and inorganic phosphate, the committed step in the de novo pyrimidine nucleotide biosynthesis pathway. The polypeptide is Aspartate carbamoyltransferase catalytic subunit (Rhodospirillum centenum (strain ATCC 51521 / SW)).